The sequence spans 1268 residues: Vigilin (1268 aa).

N-acetylserine is present on Ser-2. Thr-8 is subject to Phosphothreonine. 3 positions are modified to phosphoserine: Ser-11, Ser-31, and Ser-35. KH domains are found at residues 158 to 229 (PKEH…RLEV), 230 to 302 (EKAF…AVEV), 303 to 371 (KKSQ…SVAA), 372 to 442 (PSWL…EINI), 443 to 514 (DHKF…DLII), 515 to 588 (EQRF…SVPI), 589 to 660 (FKQF…EVSI), 661 to 734 (PAKL…DIRA), 735 to 807 (KPEY…SMLV), 808 to 880 (DPKH…ECAI), 881 to 979 (PQKF…EVEV), 980 to 1059 (PFDL…SVTV), 1060 to 1134 (DPKY…DVPL), and 1135 to 1209 (DHRV…ALQV). Thr-295 and Thr-296 each carry phosphothreonine. A Phosphoserine modification is found at Ser-317. At Tyr-437 the chain carries Phosphotyrosine. A Phosphoserine modification is found at Ser-645. Residues 914-944 (ENAVHSTEPVVQENGDEAGEGREAKDCDPGS) are disordered. Residues 932-944 (GEGREAKDCDPGS) show a composition bias toward basic and acidic residues. An N6-acetyllysine modification is found at Lys-991. The disordered stretch occupies residues 1233–1268 (WTASSSEKAPDMSSSEEFPSFGAQVAPKTLPWGPKR). The span at 1234–1249 (TASSSEKAPDMSSSEE) shows a compositional bias: polar residues. Phosphoserine is present on residues Ser-1247 and Ser-1252.

It is found in the cytoplasm. Its subcellular location is the nucleus. Functionally, appears to play a role in cell sterol metabolism. It may function to protect cells from over-accumulation of cholesterol. The protein is Vigilin (HDLBP) of Homo sapiens (Human).